Here is a 428-residue protein sequence, read N- to C-terminus: PGL/p-HBAD biosynthesis glycosyltransferase MRA_2985 (428 aa).

The interval 1 to 23 (MEETSVAGDPGPDAGTSTAPNAA) is disordered.

Belongs to the UDP-glycosyltransferase family.

Its function is as follows. Involved in glycosylation steps downstream of mono-O-methyl-glycosyl-p-hydroxybenzoic acid derivative (p-HBAD I) and 2-O-methyl-rhamnosyl-phenolphthiocerol dimycocerosate (mycoside B) during the p-hydroxybenzoic acid derivatives (p-HBAD) and glycosylated phenolphthiocerol dimycocerosates (PGL) biosynthesis. This Mycobacterium tuberculosis (strain ATCC 25177 / H37Ra) protein is PGL/p-HBAD biosynthesis glycosyltransferase MRA_2985.